Reading from the N-terminus, the 1368-residue chain is Protein suppressor 2 of zeste (1368 aa).

An RING-type zinc finger spans residues 35 to 74; that stretch reads CRLCRGYMIDPTTVDYCYHTYCRSCILKHLLRAVYCPECK. Disordered regions lie at residues 245–321, 448–628, 640–718, 861–903, 935–1001, 1057–1103, 1116–1141, 1161–1193, 1211–1271, and 1298–1322; these read SRIN…FKSL, QPLQ…QQQQ, TLPT…AVPQ, AGGK…KRSC, ALSG…NGTA, SANP…STSN, ISAN…GDDL, AASS…ASVR, STAA…KKPT, and VLSS…RPEP. A compositionally biased stretch (polar residues) spans 449 to 461; that stretch reads PLQQSASNPDSKY. Over residues 462 to 495 the composition is skewed to low complexity; it reads SPNASPMSSCSSSTNGSSSSLGTADASTSTSTSS. The span at 496 to 506 shows a compositional bias: basic residues; the sequence is SHRKRKKKHSK. 2 stretches are compositionally biased toward low complexity: residues 599–628 and 672–689; these read AEPE…QQQQ and PKQQ…VLQQ. Composition is skewed to polar residues over residues 936-953 and 962-977; these read LSGQ…NAYR and LRNT…SKSS. Composition is skewed to low complexity over residues 1078–1099, 1119–1138, 1161–1183, and 1231–1263; these read NNNN…NNNN, NSNG…TTNG, AASS…NANA, and STSN…ATSP.

The protein localises to the nucleus. Its function is as follows. Regulates expression of the homeotic selector genes by influencing higher-order chromatin structure through interaction with other proteins. This is Protein suppressor 2 of zeste (Su(z)2) from Drosophila melanogaster (Fruit fly).